The chain runs to 220 residues: Iron-sulfur cluster repair protein YtfE (220 aa).

This sequence belongs to the RIC family. YtfE subfamily. Homodimer.

The protein localises to the cytoplasm. Its function is as follows. Di-iron-containing protein involved in the repair of iron-sulfur clusters damaged by oxidative and nitrosative stress conditions. This Salmonella paratyphi A (strain AKU_12601) protein is Iron-sulfur cluster repair protein YtfE.